We begin with the raw amino-acid sequence, 479 residues long: Poly(A) polymerase catalytic subunit (479 aa).

Catalysis depends on residues Asp-202 and Asp-204. Ca(2+) is bound by residues Asp-202, Asp-204, and Asp-253.

This sequence belongs to the poxviridae poly(A) polymerase catalytic subunit family. In terms of assembly, heterodimer of a large (catalytic) subunit and a small (regulatory) subunit.

The catalysed reaction is RNA(n) + ATP = RNA(n)-3'-adenine ribonucleotide + diphosphate. In terms of biological role, polymerase that creates the 3'-poly(A) tail of mRNA's. The sequence is that of Poly(A) polymerase catalytic subunit (OPG063) from Cynomys gunnisoni (Gunnison's prairie dog).